A 76-amino-acid chain; its full sequence is Small ribosomal subunit protein eS17 (76 aa).

It belongs to the eukaryotic ribosomal protein eS17 family.

In Picrophilus torridus (strain ATCC 700027 / DSM 9790 / JCM 10055 / NBRC 100828 / KAW 2/3), this protein is Small ribosomal subunit protein eS17.